A 379-amino-acid chain; its full sequence is Gap junction alpha-1 protein (379 aa).

At 2-23 (GDWSALGRLLDKVQAYSTAGGK) the chain is on the cytoplasmic side. A helical transmembrane segment spans residues 24–44 (VWLSVLFIFRILLLGTAVESA). The Extracellular portion of the chain corresponds to 45-76 (WGDEQSAFVCNTQQPGCENVCYDKSFPISHVR). 2 disulfide bridges follow: Cys54/Cys192 and Cys187/Cys198. Residues 77-97 (FWVLQIIFVSTPTLLYLAHVF) form a helical membrane-spanning segment. Over 98-163 (YLMRKEEKLN…TYIISILFKS (66 aa)) the chain is Cytoplasmic. Residues 164 to 184 (VFEVGFIIIQWYMYGFSLSAI) traverse the membrane as a helical segment. Topologically, residues 185 to 207 (YTCKRDPCPHQVDCFLSRPTEKT) are extracellular. A helical transmembrane segment spans residues 208 to 228 (IFIWFMLIVSIVSLALNIIEL). Topologically, residues 229–379 (FYVTYKSIKD…SRPRPDDLEI (151 aa)) are cytoplasmic. A disordered region spans residues 322-379 (STISNTHAQPFDFSDEHQNTKKMAPGHEMQPLTILDQRPSSRASSHASSRPRPDDLEI). Residues 359 to 371 (RPSSRASSHASSR) are compositionally biased toward low complexity.

This sequence belongs to the connexin family. Alpha-type (group II) subfamily. A connexon is composed of a hexamer of connexins. Interacts with TMEM65. In terms of tissue distribution, expressed in most tissues. Highest levels found in eye and brain.

Its subcellular location is the cell membrane. The protein resides in the cell junction. It localises to the gap junction. Functionally, one gap junction consists of a cluster of closely packed pairs of transmembrane channels, the connexons, through which materials of low MW diffuse from one cell to a neighboring cell. Plays an essential role in gap junction communication in the ventricles. This Xenopus laevis (African clawed frog) protein is Gap junction alpha-1 protein (gja1).